The chain runs to 70 residues: MAIEKSIASSSIAEVIDRVLDKGVVIDAFVRVALVGIELIAIEARVVIASVETWLKYAEAIGLTAQPSAA.

Belongs to the gas vesicle GvpA family. As to quaternary structure, the gas vesicle shell is 2 nm thick and consists of a single layer of this protein. It forms helical ribs nearly perpendicular to the long axis of the vesicle.

The protein localises to the gas vesicle shell. Functionally, gas vesicles are hollow, gas filled proteinaceous nanostructures found in some microorganisms. During planktonic growth they allow positioning of the organism at a favorable depth for light or nutrient acquisition. GvpA forms the protein shell. This chain is Gas vesicle protein A, found in Bradyrhizobium sp. (strain ORS 278).